A 729-amino-acid chain; its full sequence is Catalase-peroxidase (729 aa).

A disordered region spans residues methionine 1 to glycine 33. Residues proline 15–valine 25 show a composition bias toward basic and acidic residues. Residues tryptophan 108–tyrosine 229 constitute a cross-link (tryptophyl-tyrosyl-methioninium (Trp-Tyr) (with M-255)). Histidine 109 serves as the catalytic Proton acceptor. Residues tyrosine 229–methionine 255 constitute a cross-link (tryptophyl-tyrosyl-methioninium (Tyr-Met) (with W-108)). Residue histidine 270 participates in heme b binding.

This sequence belongs to the peroxidase family. Peroxidase/catalase subfamily. As to quaternary structure, homodimer or homotetramer. It depends on heme b as a cofactor. Formation of the three residue Trp-Tyr-Met cross-link is important for the catalase, but not the peroxidase activity of the enzyme.

It catalyses the reaction H2O2 + AH2 = A + 2 H2O. It carries out the reaction 2 H2O2 = O2 + 2 H2O. In terms of biological role, bifunctional enzyme with both catalase and broad-spectrum peroxidase activity. In Erwinia tasmaniensis (strain DSM 17950 / CFBP 7177 / CIP 109463 / NCPPB 4357 / Et1/99), this protein is Catalase-peroxidase.